We begin with the raw amino-acid sequence, 493 residues long: Cysteine sulfinic acid decarboxylase (493 aa).

At lysine 305 the chain carries N6-(pyridoxal phosphate)lysine.

It belongs to the group II decarboxylase family. Homodimer. It depends on pyridoxal 5'-phosphate as a cofactor. As to expression, expressed in kidney and liver not detected in lymphoid tissues and lung. Expressed in kidney, liver and brain. 7 and 4 times higher expression in kidney and liver than in brain, respectively. Low level of detection in skeletal muscle. Expressed in brain, olfactory bulb, liver, skeletal muscle and kidney with the highest expression in liver and lowest in skeletal muscle (at protein level).

The catalysed reaction is L-aspartate + H(+) = beta-alanine + CO2. The enzyme catalyses 3-sulfino-L-alanine + H(+) = hypotaurine + CO2. It catalyses the reaction L-cysteate + H(+) = taurine + CO2. It functions in the pathway organosulfur biosynthesis; taurine biosynthesis; hypotaurine from L-cysteine: step 2/2. Activated by Mn(2+). Inhibited by bis-carboxymethyl-trithiocarbonate, ethylxanthogenacetic acid and 2,5-disulfoaniline. Not affected by Li(+) within 0.05-40 mM concentration range. Functionally, catalyzes the decarboxylation of L-aspartate, 3-sulfino-L-alanine (cysteine sulfinic acid), and L-cysteate to beta-alanine, hypotaurine and taurine, respectively. The preferred substrate is 3-sulfino-L-alanine. Does not exhibit any decarboxylation activity toward glutamate. The protein is Cysteine sulfinic acid decarboxylase of Mus musculus (Mouse).